Reading from the N-terminus, the 387-residue chain is Patatin group A-2 (387 aa).

The N-terminal stretch at 1 to 23 (MATTKSFLILIVMILATTSSTFA) is a signal peptide. The PNPLA domain maps to 32-230 (LSIDGGGIKG…TVADPALLSV (199 aa)). Residues 36–41 (GGGIKG) carry the GXGXXG motif. The GXSXG signature appears at 75–79 (GTSTG). Ser-77 (nucleophile) is an active-site residue. Asn-115 carries N-linked (GlcNAc...) asparagine glycosylation. The active-site Proton acceptor is Asp-216. Residues 216–218 (DGA) carry the DGA/G motif. A coiled-coil region spans residues 361–385 (ETYEEALKRFAKLLSDRKKLRANKA).

The protein belongs to the patatin family. Tuber and stolon.

The protein localises to the vacuole. Probable lipolytic acyl hydrolase (LAH), an activity which is thought to be involved in the response of tubers to pathogens. In Solanum tuberosum (Potato), this protein is Patatin group A-2.